The primary structure comprises 67 residues: Large ribosomal subunit protein uL30 (67 aa).

It belongs to the universal ribosomal protein uL30 family. In terms of assembly, part of the 50S ribosomal subunit.

The chain is Large ribosomal subunit protein uL30 from Sinorhizobium medicae (strain WSM419) (Ensifer medicae).